Here is a 149-residue protein sequence, read N- to C-terminus: 3-dehydroquinate dehydratase (149 aa).

Y23 acts as the Proton acceptor in catalysis. Residues N74, H80, and D87 each coordinate substrate. The Proton donor role is filled by H100. Substrate contacts are provided by residues L101–S102 and R111.

Belongs to the type-II 3-dehydroquinase family. As to quaternary structure, homododecamer.

It catalyses the reaction 3-dehydroquinate = 3-dehydroshikimate + H2O. Its pathway is metabolic intermediate biosynthesis; chorismate biosynthesis; chorismate from D-erythrose 4-phosphate and phosphoenolpyruvate: step 3/7. Catalyzes a trans-dehydration via an enolate intermediate. In Ruegeria pomeroyi (strain ATCC 700808 / DSM 15171 / DSS-3) (Silicibacter pomeroyi), this protein is 3-dehydroquinate dehydratase.